We begin with the raw amino-acid sequence, 329 residues long: Deoxyhypusine hydroxylase (329 aa).

HEAT-like PBS-type repeat units follow at residues 65–91 (LKHELAYCLGQSGHDAAIAPLRGVLED), 99–124 (RHEAAEALGALSDKGSLELLKKMRDD), 232–258 (FRHEIAFVFGQLSHPASIPSLTEALSN), and 265–292 (VRHEAAEALGSLGDEEGVEETLKKFLND). Fe cation contacts are provided by His67, Glu68, His100, Glu101, His234, Glu235, His267, and Glu268.

It belongs to the deoxyhypusine hydroxylase family. It depends on Fe(2+) as a cofactor.

The protein localises to the cytoplasm. It localises to the nucleus. The catalysed reaction is [eIF5A protein]-deoxyhypusine + AH2 + O2 = [eIF5A protein]-hypusine + A + H2O. The protein operates within protein modification; eIF5A hypusination. In terms of biological role, catalyzes the hydroxylation of the N(6)-(4-aminobutyl)-L-lysine intermediate to form hypusine, an essential post-translational modification only found in mature eIF-5A factor. The sequence is that of Deoxyhypusine hydroxylase from Phaeosphaeria nodorum (strain SN15 / ATCC MYA-4574 / FGSC 10173) (Glume blotch fungus).